A 54-amino-acid polypeptide reads, in one-letter code: Light-harvesting protein B-880 beta chain (54 aa).

At 1–20 (AEDRSSLSGVSDAEAKEFHA) the chain is on the cytoplasmic side. Residues H19 and H37 each contribute to the a bacteriochlorophyll site. A helical membrane pass occupies residues 21 to 43 (LFVSSFTAFIVIAVLAHVLAWAW). Residues 44 to 54 (RPWIPGPKGWA) lie on the Periplasmic side of the membrane.

The protein belongs to the antenna complex beta subunit family. In terms of assembly, the core complex is formed by different alpha and beta chains, binding bacteriochlorophyll molecules, and arranged most probably in tetrameric structures disposed around the reaction center. The non-pigmented gamma chains may constitute additional components.

It is found in the cell inner membrane. Functionally, antenna complexes are light-harvesting systems, which transfer the excitation energy to the reaction centers. This is Light-harvesting protein B-880 beta chain from Rhodoblastus acidophilus (Rhodopseudomonas acidophila).